We begin with the raw amino-acid sequence, 1295 residues long: Nonribosomal peptide synthetase resC (1295 aa).

Residues methionine 1–aspartate 24 are disordered. The adenylation stretch occupies residues lysine 221 to leucine 624. Residues glutamate 759–valine 836 form the Carrier domain. Serine 796 bears the O-(pantetheine 4'-phosphoryl)serine mark. The condensation stretch occupies residues glutamate 873–leucine 1284.

The protein belongs to the NRP synthetase family. It depends on pantetheine 4'-phosphate as a cofactor.

It carries out the reaction restrictinol + glycine + H(+) = restricticin + H2O. Its pathway is antifungal biosynthesis. In terms of biological role, nonribosomal peptide synthetase; part of the gene cluster that mediates the biosynthesis of the tetrahydropyranyl antifungal agent restricticin that acts as an inhibitor of CYP51 and blocks the ergosterol biosynthesis. Within the pathway, resC catalyzes the C3 esterification of restrictinol with glycine to yield restricticin. ResC represents an example of the emerging class of single-module NRPS-like enzymes that perform esterification reactions. The highly reducing polyketide synthase resH, the short chain dehydrogenase resG, the cyclase resF, the FAD-dependent monooxygenase resA and the enoylreductase resD are required to generate the first stable intermediate desmethylrestrictinol. ResH with resD biosynthesize the first polyketide chain intermediate that is reduced by resG, followed by epoxidation by resA before 6-endo cyclization via epoxide opening by resF leads to desmethylrestrictinol. The methyltransferase resE then catalyzes the C4 O-methylation of desmethylrestrictinol to produce restrictinol, and the nonribosomal peptide synthetase resC catalyzes the C3 esterification of restrictinol with glycine that leads to restricticin. This Aspergillus sclerotiorum protein is Nonribosomal peptide synthetase resC.